A 105-amino-acid polypeptide reads, in one-letter code: Guanyl-specific ribonuclease Ms (105 aa).

2 disulfides stabilise this stretch: Cys3-Cys11 and Cys7-Cys102. The active site involves His39. Glu57 functions as the Proton acceptor in the catalytic mechanism. The active-site Proton donor is His91.

Belongs to the ribonuclease N1/T1 family.

The catalysed reaction is [RNA] containing guanosine + H2O = an [RNA fragment]-3'-guanosine-3'-phosphate + a 5'-hydroxy-ribonucleotide-3'-[RNA fragment].. The sequence is that of Guanyl-specific ribonuclease Ms from Aspergillus phoenicis (Aspergillus saitoi).